The sequence spans 393 residues: Protein TsgA (393 aa).

The next 12 helical transmembrane spans lie at 11–31, 51–71, 78–98, 101–121, 134–154, 162–182, 206–226, 245–265, 273–293, 298–318, 332–352, and 361–381; these read WISF…GMVM, FLNA…EIVP, FGFI…SLAL, AAMF…TFLI, LLFT…VAAF, WYWV…LTFG, IGVL…LGFI, ALVS…SFIL, ILTV…TGTQ, WFIL…ITLG, FILT…GPIV, and LLTA…LGFV.

This sequence belongs to the major facilitator superfamily. TsgA family.

It is found in the cell inner membrane. The sequence is that of Protein TsgA from Salmonella arizonae (strain ATCC BAA-731 / CDC346-86 / RSK2980).